Consider the following 394-residue polypeptide: Flavohemoprotein (394 aa).

The Globin domain maps to 1–136 (MLSENTINIV…LANVFIQREE (136 aa)). H85 contacts heme b. Catalysis depends on charge relay system residues Y95 and E135. Residues 147-394 (GGWRGLREFE…YECFGPHKVV (248 aa)) are reductase. Positions 150-255 (RGLREFELVE…AAPAGDFFLD (106 aa)) constitute an FAD-binding FR-type domain. Residues Y188 and 204–207 (RQYS) contribute to the FAD site. Residue 268 to 273 (GVGLTP) participates in NADP(+) binding. An FAD-binding site is contributed by 387-390 (CFGP).

It belongs to the globin family. Two-domain flavohemoproteins subfamily. The protein in the C-terminal section; belongs to the flavoprotein pyridine nucleotide cytochrome reductase family. Heme b serves as cofactor. Requires FAD as cofactor.

It catalyses the reaction 2 nitric oxide + NADPH + 2 O2 = 2 nitrate + NADP(+) + H(+). It carries out the reaction 2 nitric oxide + NADH + 2 O2 = 2 nitrate + NAD(+) + H(+). Functionally, is involved in NO detoxification in an aerobic process, termed nitric oxide dioxygenase (NOD) reaction that utilizes O(2) and NAD(P)H to convert NO to nitrate, which protects the bacterium from various noxious nitrogen compounds. Therefore, plays a central role in the inducible response to nitrosative stress. In Vibrio vulnificus (strain CMCP6), this protein is Flavohemoprotein.